We begin with the raw amino-acid sequence, 464 residues long: Non-neuronal cytoplasmic intermediate filament protein (464 aa).

The span at 1 to 14 (MSTQTKKVTRTIIT) shows a compositional bias: polar residues. A disordered region spans residues 1 to 59 (MSTQTKKVTRTIITSSSGGGGGGGGGRASYSSSGRFSGGGGRMRAGGVTSRRSVGSSYS). The interval 1–101 (MSTQTKKVTR…RMTRAHEKQE (101 aa)) is head. The segment covering 17–27 (SGGGGGGGGGR) has biased composition (gly residues). Low complexity predominate over residues 45-59 (AGGVTSRRSVGSSYS). Positions 98 to 413 (EKQELSHLND…KLLEGEEIRL (316 aa)) constitute an IF rod domain. The segment at 102 to 133 (LSHLNDRFASYIDKVRYLQERNSKLEAQIKIQ) is coil 1A. Residues 134–144 (ESREAPNIKDL) form a linker 1 region. The segment at 145–237 (YEKELRDLRA…FLKRVHDEEI (93 aa)) is coil 1B. The interval 238–264 (RQLQDQLNESLTIVEVDSRAASTFAPG) is linker 2. A coil 2 region spans residues 265 to 413 (PDLTEALREI…KLLEGEEIRL (149 aa)). Residues 414–464 (FGESKEGVQQTSSSSSSSYQYSMKSGSGGGGGGSSSGKQQVTVSVSSGEEK) form a tail region. The tract at residues 415–464 (GESKEGVQQTSSSSSSSYQYSMKSGSGGGGGGSSSGKQQVTVSVSSGEEK) is disordered. The span at 420 to 438 (GVQQTSSSSSSSYQYSMKS) shows a compositional bias: low complexity. Positions 439–448 (GSGGGGGGSS) are enriched in gly residues. The segment covering 449–464 (SGKQQVTVSVSSGEEK) has biased composition (low complexity).

The protein belongs to the intermediate filament family. In terms of assembly, can form homopolymers.

The protein resides in the cytoplasm. The sequence is that of Non-neuronal cytoplasmic intermediate filament protein from Branchiostoma lanceolatum (Common lancelet).